The sequence spans 453 residues: Bifunctional protein GlmU (453 aa).

Residues 1-225 (MHAHVILAAG…AEEALGVNTR (225 aa)) form a pyrophosphorylase region. UDP-N-acetyl-alpha-D-glucosamine contacts are provided by residues 7–10 (LAAG), Lys21, Gln72, and 77–78 (GT). Asp102 is a binding site for Mg(2+). UDP-N-acetyl-alpha-D-glucosamine-binding residues include Gly138, Glu152, Asn167, and Asn223. Position 223 (Asn223) interacts with Mg(2+). The tract at residues 226 to 246 (EELARVEGVLLRRLRAEWMGK) is linker. The N-acetyltransferase stretch occupies residues 247–453 (GVRMILPETI…GYALRKLGEG (207 aa)). UDP-N-acetyl-alpha-D-glucosamine is bound by residues Arg329 and Lys347. Catalysis depends on His359, which acts as the Proton acceptor. The UDP-N-acetyl-alpha-D-glucosamine site is built by Tyr362 and Asn373. Residues Ala376, 382 to 383 (NY), Ser401, Ala419, and Arg436 contribute to the acetyl-CoA site.

The protein in the N-terminal section; belongs to the N-acetylglucosamine-1-phosphate uridyltransferase family. This sequence in the C-terminal section; belongs to the transferase hexapeptide repeat family. In terms of assembly, homotrimer. The cofactor is Mg(2+).

Its subcellular location is the cytoplasm. It catalyses the reaction alpha-D-glucosamine 1-phosphate + acetyl-CoA = N-acetyl-alpha-D-glucosamine 1-phosphate + CoA + H(+). The catalysed reaction is N-acetyl-alpha-D-glucosamine 1-phosphate + UTP + H(+) = UDP-N-acetyl-alpha-D-glucosamine + diphosphate. It functions in the pathway nucleotide-sugar biosynthesis; UDP-N-acetyl-alpha-D-glucosamine biosynthesis; N-acetyl-alpha-D-glucosamine 1-phosphate from alpha-D-glucosamine 6-phosphate (route II): step 2/2. Its pathway is nucleotide-sugar biosynthesis; UDP-N-acetyl-alpha-D-glucosamine biosynthesis; UDP-N-acetyl-alpha-D-glucosamine from N-acetyl-alpha-D-glucosamine 1-phosphate: step 1/1. It participates in bacterial outer membrane biogenesis; LPS lipid A biosynthesis. Its function is as follows. Catalyzes the last two sequential reactions in the de novo biosynthetic pathway for UDP-N-acetylglucosamine (UDP-GlcNAc). The C-terminal domain catalyzes the transfer of acetyl group from acetyl coenzyme A to glucosamine-1-phosphate (GlcN-1-P) to produce N-acetylglucosamine-1-phosphate (GlcNAc-1-P), which is converted into UDP-GlcNAc by the transfer of uridine 5-monophosphate (from uridine 5-triphosphate), a reaction catalyzed by the N-terminal domain. In Thermus thermophilus (strain ATCC 27634 / DSM 579 / HB8), this protein is Bifunctional protein GlmU.